Here is a 269-residue protein sequence, read N- to C-terminus: GTP cyclohydrolase FolE2 (269 aa).

Belongs to the GTP cyclohydrolase IV family.

It catalyses the reaction GTP + H2O = 7,8-dihydroneopterin 3'-triphosphate + formate + H(+). The protein operates within cofactor biosynthesis; 7,8-dihydroneopterin triphosphate biosynthesis; 7,8-dihydroneopterin triphosphate from GTP: step 1/1. Functionally, converts GTP to 7,8-dihydroneopterin triphosphate. The sequence is that of GTP cyclohydrolase FolE2 from Burkholderia vietnamiensis (strain G4 / LMG 22486) (Burkholderia cepacia (strain R1808)).